Here is a 295-residue protein sequence, read N- to C-terminus: Small ribosomal subunit protein uS3 (295 aa).

In terms of domain architecture, KH type-2 spans 39-107 (VREYLKKKLK…PVAVNIEEVR (69 aa)). A disordered region spans residues 213–295 (GTGAKMIEVA…AAAADGAKTE (83 aa)). The span at 224 to 245 (EERKPRGPRRDARPGDRPDRGA) shows a compositional bias: basic and acidic residues. Low complexity-rich tracts occupy residues 246-255 (PRGAPRAPRG) and 283-295 (AAPAAAADGAKTE).

Belongs to the universal ribosomal protein uS3 family. As to quaternary structure, part of the 30S ribosomal subunit. Forms a tight complex with proteins S10 and S14.

Binds the lower part of the 30S subunit head. Binds mRNA in the 70S ribosome, positioning it for translation. The polypeptide is Small ribosomal subunit protein uS3 (Polaromonas naphthalenivorans (strain CJ2)).